The following is a 480-amino-acid chain: MTLSFTAHWRDELPATYTALLPTPLKNARLIWYNDKLAQQLAIPASLFDVTNGAGVWGGETLLPGMSPVAQVYSGHQFGVWAGQLGDGRGILLGEQLLADGSTLDWHLKGAGLTPYSRMGDGRAVLRSTIRESLASEAMHYLGIPTTRALSIVTSDTPVQRETQEAGAMLMRLAQSHMRFGHFEHFYYRREPEKVQQLADFAIRHYWPQWQDAPEKYDLWFEEVAARTGRLIADWQTIGFAHGVMNTDNMSILGLTIDYGPFGFLDDYDPGFIGNHSDHQGRYRFDNQPSVALWNLQRLAQTLTPFIEIDALNRALDRYQDALLTRYGQRMRQKLGFFTEQKDDNVLLNELFSLMAREGSDYTRTFRMLSHTEQQSASSPLRDTFIDRAAFDGWFDRYRARLRTEAVDDALRQQQMQSVNPAVVLRNWLAQRAIDAAEQGDMAELHRLHEILRQPFIDRDDDYASRPPEWGKRLEVSCSS.

Glycine 86, glycine 88, arginine 89, lysine 109, aspartate 121, glycine 122, arginine 172, and arginine 179 together coordinate ATP. The active-site Proton acceptor is the aspartate 248. Residues asparagine 249 and aspartate 258 each coordinate Mg(2+). Aspartate 258 provides a ligand contact to ATP.

This sequence belongs to the SELO family. The cofactor is Mg(2+). It depends on Mn(2+) as a cofactor.

It catalyses the reaction L-seryl-[protein] + ATP = 3-O-(5'-adenylyl)-L-seryl-[protein] + diphosphate. The enzyme catalyses L-threonyl-[protein] + ATP = 3-O-(5'-adenylyl)-L-threonyl-[protein] + diphosphate. The catalysed reaction is L-tyrosyl-[protein] + ATP = O-(5'-adenylyl)-L-tyrosyl-[protein] + diphosphate. It carries out the reaction L-histidyl-[protein] + UTP = N(tele)-(5'-uridylyl)-L-histidyl-[protein] + diphosphate. It catalyses the reaction L-seryl-[protein] + UTP = O-(5'-uridylyl)-L-seryl-[protein] + diphosphate. The enzyme catalyses L-tyrosyl-[protein] + UTP = O-(5'-uridylyl)-L-tyrosyl-[protein] + diphosphate. In terms of biological role, nucleotidyltransferase involved in the post-translational modification of proteins. It can catalyze the addition of adenosine monophosphate (AMP) or uridine monophosphate (UMP) to a protein, resulting in modifications known as AMPylation and UMPylation. The sequence is that of Protein nucleotidyltransferase YdiU from Salmonella arizonae (strain ATCC BAA-731 / CDC346-86 / RSK2980).